Here is a 410-residue protein sequence, read N- to C-terminus: Cytohesin-2 (410 aa).

The stretch at 13-56 (PEERMELENIRRRKQELLVEIQRLREELSEAMSEVEGLEANEGS) forms a coiled coil. One can recognise an SEC7 domain in the interval 54–241 (EGSKTLQRNR…RNLYDSIRNE (188 aa)). Positions 259–386 (NPDREGWLLK…WIKSIQAAVS (128 aa)) constitute a PH domain. Residues 268 to 271 (KLGA), arginine 290, tyrosine 301, arginine 311, lysine 349, asparagine 360, and histidine 361 each bind a 1,2-diacyl-sn-glycero-3-phospho-(1D-myo-inositol-3,4,5-trisphosphate). The segment at 397-405 (RKKRISVKK) is C-terminal autoinhibitory region.

Heteromer. Composed of TAMALIN, CYTH2 and at least one GRM1. Interacts with ARRB1. Interacts with ARL4D; the interaction is direct. Directly interacts with CCDC120 through the coiled coil domain; this interaction stabilizes CCDC120, possibly by preventing its ubiquitination, and is required for neurite growth in neuroblastoma cells. Interacts (via N-terminal domain) with INAVA (via N-terminal domain).

Its subcellular location is the cell membrane. It is found in the cytoplasm. The protein resides in the cell projection. The protein localises to the growth cone. Functionally, acts as a guanine-nucleotide exchange factor (GEF). Promotes guanine-nucleotide exchange on ARF1, ARF3 and ARF6. Promotes the activation of ARF factors through replacement of GDP with GTP. The cell membrane form, in association with ARL4 proteins, recruits ARF6 to the plasma membrane. Involved in neurite growth. The protein is Cytohesin-2 (CYTH2) of Bos taurus (Bovine).